The chain runs to 340 residues: Citramalyl-CoA lyase, mitochondrial (340 aa).

The transit peptide at 1–22 directs the protein to the mitochondrion; that stretch reads MALRLLRRAARGAAAAALLRLK. Residues Tyr50, Lys57, and Lys61 each coordinate substrate. 2 positions are modified to N6-acetyllysine: Lys57 and Lys61. Residues Lys82 and Lys92 each carry the N6-acetyllysine; alternate modification. Residues Lys82 and Lys92 each carry the N6-succinyllysine; alternate modification. Arg107 provides a ligand contact to substrate. Residues Glu171 and Asp206 each contribute to the Mg(2+) site. 272 to 273 provides a ligand contact to substrate; the sequence is IH. At Lys309 the chain carries N6-succinyllysine. Residue Asp320 is part of the active site.

The protein belongs to the HpcH/HpaI aldolase family. Citrate lyase beta subunit-like subfamily. In terms of assembly, homotrimer. Mg(2+) is required as a cofactor.

It is found in the mitochondrion. It carries out the reaction glyoxylate + acetyl-CoA + H2O = (S)-malate + CoA + H(+). The catalysed reaction is propanoyl-CoA + glyoxylate + H2O = 3-methylmalate + CoA + H(+). It catalyses the reaction (3S)-citramalyl-CoA = pyruvate + acetyl-CoA. The enzyme catalyses (S)-malyl-CoA + H2O = (S)-malate + CoA + H(+). Functionally, mitochondrial citramalyl-CoA lyase indirectly involved in the vitamin B12 metabolism. Converts citramalyl-CoA into acetyl-CoA and pyruvate in the C5-dicarboxylate catabolism pathway. The C5-dicarboxylate catabolism pathway is required to detoxify itaconate, a vitamin B12-poisoning metabolite. Also acts as a malate synthase in vitro, converting glyoxylate and acetyl-CoA to malate. Also displays malyl-CoA thioesterase activity. Also acts as a beta-methylmalate synthase in vitro, by mediating conversion of glyoxylate and propionyl-CoA to beta-methylmalate. Also has very weak citramalate synthase activity in vitro. This is Citramalyl-CoA lyase, mitochondrial from Homo sapiens (Human).